The sequence spans 226 residues: Thymocyte nuclear protein 1 (226 aa).

The tract at residues 1-38 is disordered; that stretch reads MPRPRKRQTGTAGPDRKKLSGKRTKTENSESTSVKLEN. Residues 5-10 carry the Nuclear localization signal motif; it reads RKRQTG. Over residues 14 to 28 the composition is skewed to basic and acidic residues; that stretch reads PDRKKLSGKRTKTEN. Residues 29 to 38 are compositionally biased toward polar residues; sequence SESTSVKLEN.

Post-translationally, phosphorylated. As to expression, expressed in the medulla containing mature thymocytes, but not the cortex having immature thymocytes (at protein level). Abundant expression seen in testis, liver, brain and kidney with lower levels of the expression in thymus, spleen, heart and stomach.

The protein resides in the nucleus. Its function is as follows. Specifically binds 5-hydroxymethylcytosine (5hmC), suggesting that it acts as a specific reader of 5hmC. The sequence is that of Thymocyte nuclear protein 1 (Thyn1) from Mus musculus (Mouse).